The following is a 169-amino-acid chain: Putative cysteine protease YraA (169 aa).

Residues 3–169 (KKIAVLVTDQ…FNRESLNLLK (167 aa)) enclose the PfpI endopeptidase domain. The active-site Nucleophile is Cys-103. His-104 is a catalytic residue.

This sequence belongs to the peptidase C56 family.

Its function is as follows. Functions in the protection against aldehyde-stress, possibly by degrading damaged proteins. This chain is Putative cysteine protease YraA (yraA), found in Bacillus subtilis (strain 168).